The primary structure comprises 360 residues: Peptide chain release factor 1 (360 aa).

Residue glutamine 234 is modified to N5-methylglutamine. A disordered region spans residues 285–305 (RAQGIAEDRKSQVGTGDRSER).

This sequence belongs to the prokaryotic/mitochondrial release factor family. In terms of processing, methylated by PrmC. Methylation increases the termination efficiency of RF1.

The protein localises to the cytoplasm. Peptide chain release factor 1 directs the termination of translation in response to the peptide chain termination codons UAG and UAA. This is Peptide chain release factor 1 from Clostridium beijerinckii (strain ATCC 51743 / NCIMB 8052) (Clostridium acetobutylicum).